Here is a 156-residue protein sequence, read N- to C-terminus: SsrA-binding protein (156 aa).

This sequence belongs to the SmpB family.

Its subcellular location is the cytoplasm. Required for rescue of stalled ribosomes mediated by trans-translation. Binds to transfer-messenger RNA (tmRNA), required for stable association of tmRNA with ribosomes. tmRNA and SmpB together mimic tRNA shape, replacing the anticodon stem-loop with SmpB. tmRNA is encoded by the ssrA gene; the 2 termini fold to resemble tRNA(Ala) and it encodes a 'tag peptide', a short internal open reading frame. During trans-translation Ala-aminoacylated tmRNA acts like a tRNA, entering the A-site of stalled ribosomes, displacing the stalled mRNA. The ribosome then switches to translate the ORF on the tmRNA; the nascent peptide is terminated with the 'tag peptide' encoded by the tmRNA and targeted for degradation. The ribosome is freed to recommence translation, which seems to be the essential function of trans-translation. This Lactiplantibacillus plantarum (strain ATCC BAA-793 / NCIMB 8826 / WCFS1) (Lactobacillus plantarum) protein is SsrA-binding protein.